The primary structure comprises 304 residues: ATP phosphoribosyltransferase (304 aa).

Belongs to the ATP phosphoribosyltransferase family. Long subfamily. Mg(2+) serves as cofactor.

It localises to the cytoplasm. The enzyme catalyses 1-(5-phospho-beta-D-ribosyl)-ATP + diphosphate = 5-phospho-alpha-D-ribose 1-diphosphate + ATP. It participates in amino-acid biosynthesis; L-histidine biosynthesis; L-histidine from 5-phospho-alpha-D-ribose 1-diphosphate: step 1/9. Feedback inhibited by histidine. Its function is as follows. Catalyzes the condensation of ATP and 5-phosphoribose 1-diphosphate to form N'-(5'-phosphoribosyl)-ATP (PR-ATP). Has a crucial role in the pathway because the rate of histidine biosynthesis seems to be controlled primarily by regulation of HisG enzymatic activity. This is ATP phosphoribosyltransferase from Xylella fastidiosa (strain 9a5c).